The following is a 295-amino-acid chain: Small ribosomal subunit biogenesis GTPase RsgA (295 aa).

Residues 65–223 enclose the CP-type G domain; the sequence is KNQLVRPPVA…VLDTPGFTAL (159 aa). Residues 114–117 and 165–173 contribute to the GTP site; these read NKVD and GPSGVGKSS. Residues Cys-246, Cys-251, His-253, and Cys-259 each coordinate Zn(2+).

The protein belongs to the TRAFAC class YlqF/YawG GTPase family. RsgA subfamily. Monomer. Associates with 30S ribosomal subunit, binds 16S rRNA. Zn(2+) is required as a cofactor.

The protein localises to the cytoplasm. In terms of biological role, one of several proteins that assist in the late maturation steps of the functional core of the 30S ribosomal subunit. Helps release RbfA from mature subunits. May play a role in the assembly of ribosomal proteins into the subunit. Circularly permuted GTPase that catalyzes slow GTP hydrolysis, GTPase activity is stimulated by the 30S ribosomal subunit. The protein is Small ribosomal subunit biogenesis GTPase RsgA of Caldanaerobacter subterraneus subsp. tengcongensis (strain DSM 15242 / JCM 11007 / NBRC 100824 / MB4) (Thermoanaerobacter tengcongensis).